Reading from the N-terminus, the 256-residue chain is DNA repair protein RecO (256 aa).

This sequence belongs to the RecO family.

Functionally, involved in DNA repair and RecF pathway recombination. This is DNA repair protein RecO from Rhizobium etli (strain ATCC 51251 / DSM 11541 / JCM 21823 / NBRC 15573 / CFN 42).